The following is a 158-amino-acid chain: MLP-like protein 43 (158 aa).

The residue at position 2 (alanine 2) is an N-acetylalanine.

Belongs to the MLP family.

The protein is MLP-like protein 43 (MLP43) of Arabidopsis thaliana (Mouse-ear cress).